The sequence spans 245 residues: Adenosylcobinamide-GDP ribazoletransferase (245 aa).

5 consecutive transmembrane segments (helical) span residues 31 to 51, 61 to 81, 113 to 133, 138 to 158, and 192 to 212; these read FGRA…VLYA, PLLQ…ALHL, VAVV…AALL, AGLL…LFLT, and LAFG…FAWL.

It belongs to the CobS family. Requires Mg(2+) as cofactor.

Its subcellular location is the cell inner membrane. It carries out the reaction alpha-ribazole + adenosylcob(III)inamide-GDP = adenosylcob(III)alamin + GMP + H(+). The catalysed reaction is alpha-ribazole 5'-phosphate + adenosylcob(III)inamide-GDP = adenosylcob(III)alamin 5'-phosphate + GMP + H(+). The protein operates within cofactor biosynthesis; adenosylcobalamin biosynthesis; adenosylcobalamin from cob(II)yrinate a,c-diamide: step 7/7. Its function is as follows. Joins adenosylcobinamide-GDP and alpha-ribazole to generate adenosylcobalamin (Ado-cobalamin). Also synthesizes adenosylcobalamin 5'-phosphate from adenosylcobinamide-GDP and alpha-ribazole 5'-phosphate. The chain is Adenosylcobinamide-GDP ribazoletransferase from Pseudomonas aeruginosa (strain ATCC 15692 / DSM 22644 / CIP 104116 / JCM 14847 / LMG 12228 / 1C / PRS 101 / PAO1).